Here is a 389-residue protein sequence, read N- to C-terminus: Flagellar P-ring protein (389 aa).

Residues Met-1–Ala-33 form the signal peptide.

The protein belongs to the FlgI family. The basal body constitutes a major portion of the flagellar organelle and consists of four rings (L,P,S, and M) mounted on a central rod.

Its subcellular location is the periplasm. The protein localises to the bacterial flagellum basal body. Assembles around the rod to form the L-ring and probably protects the motor/basal body from shearing forces during rotation. This Burkholderia mallei (strain ATCC 23344) protein is Flagellar P-ring protein.